Reading from the N-terminus, the 206-residue chain is Glycerol-3-phosphate acyltransferase (206 aa).

5 consecutive transmembrane segments (helical) span residues 14–34 (IALA…GLIL), 67–87 (ATLL…GYFL), 91–111 (AAII…WIGF), 124–144 (LLGV…AVAV), and 148–168 (YSSL…LILG).

The protein belongs to the PlsY family. Probably interacts with PlsX.

It localises to the cell inner membrane. The enzyme catalyses an acyl phosphate + sn-glycerol 3-phosphate = a 1-acyl-sn-glycero-3-phosphate + phosphate. It participates in lipid metabolism; phospholipid metabolism. Functionally, catalyzes the transfer of an acyl group from acyl-phosphate (acyl-PO(4)) to glycerol-3-phosphate (G3P) to form lysophosphatidic acid (LPA). This enzyme utilizes acyl-phosphate as fatty acyl donor, but not acyl-CoA or acyl-ACP. This chain is Glycerol-3-phosphate acyltransferase, found in Rhizobium etli (strain ATCC 51251 / DSM 11541 / JCM 21823 / NBRC 15573 / CFN 42).